A 633-amino-acid polypeptide reads, in one-letter code: Chaperone protein HtpG (633 aa).

The a; substrate-binding stretch occupies residues M1–R345. Residues E346–R562 are b. The interval L563–G633 is c.

It belongs to the heat shock protein 90 family. In terms of assembly, homodimer.

The protein resides in the cytoplasm. Functionally, molecular chaperone. Has ATPase activity. This Halorhodospira halophila (strain DSM 244 / SL1) (Ectothiorhodospira halophila (strain DSM 244 / SL1)) protein is Chaperone protein HtpG.